The following is a 238-amino-acid chain: Uroporphyrinogen-III C-methyltransferase (238 aa).

S-adenosyl-L-homocysteine is bound by residues proline 11, 87-89 (GGD), 117-118 (TS), and methionine 170.

This sequence belongs to the precorrin methyltransferase family. In terms of assembly, monomer.

The catalysed reaction is uroporphyrinogen III + 2 S-adenosyl-L-methionine = precorrin-2 + 2 S-adenosyl-L-homocysteine + H(+). It functions in the pathway cofactor biosynthesis; adenosylcobalamin biosynthesis; precorrin-2 from uroporphyrinogen III: step 1/1. It participates in porphyrin-containing compound metabolism; siroheme biosynthesis; precorrin-2 from uroporphyrinogen III: step 1/1. Its activity is regulated as follows. SUMT exhibits a substrate inhibition phenomenon at uroporphyrinogen III concentrations above 0.5 uM; this property might play a regulatory role in cobalamin biosynthesis. Its function is as follows. Catalyzes the two successive C-2 and C-7 methylation reactions involved in the conversion of uroporphyrinogen III to precorrin-2 via the intermediate formation of precorrin-1. It is a step in the biosynthesis of both cobalamin (vitamin B12) and siroheme. In Priestia megaterium (Bacillus megaterium), this protein is Uroporphyrinogen-III C-methyltransferase.